We begin with the raw amino-acid sequence, 265 residues long: Hydroxyethylthiazole kinase (265 aa).

Position 50 (methionine 50) interacts with substrate. ATP contacts are provided by arginine 125 and threonine 171. Glycine 198 serves as a coordination point for substrate.

This sequence belongs to the Thz kinase family. It depends on Mg(2+) as a cofactor.

The catalysed reaction is 5-(2-hydroxyethyl)-4-methylthiazole + ATP = 4-methyl-5-(2-phosphooxyethyl)-thiazole + ADP + H(+). It functions in the pathway cofactor biosynthesis; thiamine diphosphate biosynthesis; 4-methyl-5-(2-phosphoethyl)-thiazole from 5-(2-hydroxyethyl)-4-methylthiazole: step 1/1. Functionally, catalyzes the phosphorylation of the hydroxyl group of 4-methyl-5-beta-hydroxyethylthiazole (THZ). The chain is Hydroxyethylthiazole kinase from Salmonella schwarzengrund (strain CVM19633).